A 128-amino-acid chain; its full sequence is Holo-[acyl-carrier-protein] synthase (128 aa).

2 residues coordinate Mg(2+): Asp9 and Glu56.

The protein belongs to the P-Pant transferase superfamily. AcpS family. It depends on Mg(2+) as a cofactor.

The protein resides in the cytoplasm. The catalysed reaction is apo-[ACP] + CoA = holo-[ACP] + adenosine 3',5'-bisphosphate + H(+). Its function is as follows. Transfers the 4'-phosphopantetheine moiety from coenzyme A to a Ser of acyl-carrier-protein. This chain is Holo-[acyl-carrier-protein] synthase, found in Pelagibacter ubique (strain HTCC1062).